The sequence spans 1969 residues: TP53-binding protein 1 (1969 aa).

The disordered stretch occupies residues Met-1–Cys-24. Polar residues predominate over residues Pro-8–Thr-22. Ser-30, Ser-68, and Ser-73 each carry phosphoserine. The disordered stretch occupies residues Val-67–Ser-168. Residues Asn-69–Asn-85 show a composition bias toward polar residues. The span at Glu-86–Asp-95 shows a compositional bias: basic and acidic residues. Over residues His-101–Gln-110 the composition is skewed to polar residues. Ser-109 carries the phosphoserine modification. Positions Pro-135–Lys-148 are enriched in acidic residues. Low complexity predominate over residues Ala-158–Ser-168. Phosphoserine is present on residues Ser-169, Ser-179, and Ser-181. Lys-220 is covalently cross-linked (Glycyl lysine isopeptide (Lys-Gly) (interchain with G-Cter in SUMO1); alternate). Lys-220 participates in a covalent cross-link: Glycyl lysine isopeptide (Lys-Gly) (interchain with G-Cter in SUMO2); alternate. Disordered regions lie at residues Glu-254–Pro-337, Leu-352–Arg-599, and Asp-614–Ala-707. Ser-267 and Ser-268 each carry phosphoserine. Residues Glu-277–Leu-288 are compositionally biased toward basic and acidic residues. Positions Val-294–Pro-324 are enriched in polar residues. Ser-297 carries the post-translational modification Phosphoserine. The residue at position 305 (Thr-305) is a Phosphothreonine. A phosphoserine mark is found at Ser-368, Ser-382, and Ser-397. Residues Gln-407–Lys-419 show a composition bias toward basic and acidic residues. The span at Pro-426–Val-442 shows a compositional bias: polar residues. Phosphoserine is present on residues Ser-429, Ser-452, and Ser-464. Polar residues predominate over residues His-481–Ser-490. A compositionally biased stretch (basic and acidic residues) spans Lys-491–Thr-501. 4 positions are modified to phosphoserine: Ser-507, Ser-518, Ser-523, and Ser-525. Residues Leu-517 to Met-528 show a composition bias toward polar residues. A phosphothreonine mark is found at Thr-543 and Thr-548. 2 positions are modified to phosphoserine: Ser-552 and Ser-579. Residues Val-566–Val-582 are compositionally biased toward polar residues. Residues Asp-583–Arg-599 are compositionally biased toward basic and acidic residues. The segment covering Asp-614–Leu-634 has biased composition (polar residues). Phosphoserine is present on residues Ser-622, Ser-627, Ser-631, and Ser-632. The segment covering Met-640–Glu-649 has biased composition (basic and acidic residues). Thr-662 carries the phosphothreonine modification. Over residues Ser-666–Pro-675 the composition is skewed to basic and acidic residues. Ser-684, Ser-716, Ser-719, and Ser-763 each carry phosphoserine. Positions Lys-754–Ala-870 are disordered. Positions Ala-790 to Val-818 are enriched in basic and acidic residues. Ser-822 is subject to Phosphoserine. Over residues Val-830–Gln-839 the composition is skewed to basic and acidic residues. Residue Thr-912 is modified to Phosphothreonine. Lys-920 participates in a covalent cross-link: Glycyl lysine isopeptide (Lys-Gly) (interchain with G-Cter in SUMO2). Residues Ser-927–Ala-1017 form a disordered region. The segment covering Tyr-935–Ser-949 has biased composition (polar residues). The span at Glu-961–Leu-975 shows a compositional bias: basic and acidic residues. At Ser-965 the chain carries Phosphoserine. Lys-974 participates in a covalent cross-link: Glycyl lysine isopeptide (Lys-Gly) (interchain with G-Cter in SUMO2). Residue Ser-1018 is modified to Phosphoserine. Disordered stretches follow at residues Gln-1034–Pro-1144, Gly-1178–His-1231, and Thr-1267–Ser-1478. Residues Glu-1060–Gln-1074 are compositionally biased toward basic and acidic residues. Residues Ser-1075 and Ser-1096 each carry the phosphoserine modification. Residues Ser-1099–Glu-1112 show a composition bias toward low complexity. Ser-1115 carries the post-translational modification Phosphoserine. Polar residues predominate over residues Gly-1178–Arg-1197. Phosphothreonine is present on Thr-1211. Residues Ser-1213 and Ser-1216 each carry the phosphoserine modification. Residues Glu-1269 to Thr-1282 show a composition bias toward acidic residues. The segment covering Asp-1295 to Ser-1326 has biased composition (low complexity). Ser-1314 carries the post-translational modification Phosphoserine. At Arg-1329 the chain carries Omega-N-methylarginine. The residue at position 1339 (Ser-1339) is a Phosphoserine. The residue at position 1352 (Arg-1352) is an Omega-N-methylarginine. At Ser-1359 the chain carries Phosphoserine. Lys-1362 participates in a covalent cross-link: Glycyl lysine isopeptide (Lys-Gly) (interchain with G-Cter in SUMO2). Position 1365 is a phosphoserine (Ser-1365). A GAR motif is present at residues Arg-1393–Arg-1400. Ser-1423 and Ser-1427 each carry phosphoserine. Residue Lys-1431 forms a Glycyl lysine isopeptide (Lys-Gly) (interchain with G-Cter in SUMO1); alternate linkage. A Glycyl lysine isopeptide (Lys-Gly) (interchain with G-Cter in SUMO2); alternate cross-link involves residue Lys-1431. Phosphoserine occurs at positions 1457, 1459, 1470, and 1471. The segment covering Gly-1469 to Ser-1478 has biased composition (low complexity). The interval Asn-1481–Gly-1600 is tudor-like. Residues Trp-1492–Tyr-1520 are interaction with dimethylated histone H4. Lys-1560 is covalently cross-linked (Glycyl lysine isopeptide (Lys-Gly) (interchain with G-Cter in SUMO1); alternate). Lys-1560 participates in a covalent cross-link: Glycyl lysine isopeptide (Lys-Gly) (interchain with G-Cter in SUMO2); alternate. The UDR signature appears at Pro-1601–Ser-1628. Thr-1606 carries the post-translational modification Phosphothreonine. A phosphoserine mark is found at Ser-1615, Ser-1628, and Ser-1632. Residues Arg-1624 to Pro-1715 are disordered. Over residues Ser-1631–Arg-1648 the composition is skewed to low complexity. Residues Thr-1635 and Thr-1645 each carry the phosphothreonine modification. A phosphoserine mark is found at Ser-1653, Ser-1670, and Ser-1675. A Glycyl lysine isopeptide (Lys-Gly) (interchain with G-Cter in ubiquitin) cross-link involves residue Lys-1682. Phosphoserine is present on residues Ser-1698 and Ser-1756. BRCT domains lie at Leu-1749–Leu-1845 and Pro-1861–Lys-1961.

Homoligomer. Interacts with p53/TP53 (via the central domain). Interacts with DCLRE1C. Interacts with histone H2AX and this requires phosphorylation of H2AX on 'Ser-139'. Interacts with histone H4 that has been dimethylated at 'Lys-20' (H4K20me2). Has low affinity for histone H4 containing monomethylated 'Lys-20' (H4K20me1). Does not bind histone H4 containing unmethylated or trimethylated 'Lys-20' (H4K20me3). Has low affinity for histone H3 that has been dimethylated on 'Lys-79'. Has very low affinity for histone H3 that has been monomethylated on 'Lys-79' (in vitro). Does not bind unmethylated histone H3. Interacts with histone H2A monoubiquitinated at 'Lys-15' (H2AK15Ub). Interacts with PWWP3A/EXPAND1. Interacts with CHEK2; modulates CHEK2 phosphorylation at 'Thr-68' in response to infrared. Interacts with MSL1; this interaction may be required for MSL1 DNA repair activity, but not for histone acetyltransferase activity. Interacts (when phosphorylated by ATM) with RIF1. Interacts (via the Tudor-like domain) with NUDT16L1/TIRR; interaction masks the Tudor-like domain and prevents recruitment to chromatin. Interacts with PAXIP1. Interacts with IFI202A. Interacts with SHLD2. Interacts (when phosphorylated) with TOPBP1. Interacts with GFI1; promoting methylation by PRMT1. Interacts with (phosphorylated) DYNLL1; specifically binds DYNLL1 phosphorylated at 'Ser-88' and promotes its recruitment to double stand breaks (DSBs). Phosphorylated at basal level in the absence of DNA damage. Phosphorylated by ATM in response to DNA damage: phosphorylation at different sites promotes interaction with different set of proteins: phosphorylation at the N-terminus by ATM (residues from 11-181) promotes interaction with PAXIP1 and non-homologous end joining (NHEJ) of dysfunctional telomeres. Phosphorylation by ATM at residues that are located more C-terminus (residues 300-650) leads to promote interaction with RIF1. Interaction with RIF1 leads to disrupt interaction with NUDT16L1/TIRR. Phosphorylation at Thr-1606 and Ser-1615 in the UDR motif blocks interaction with H2AK15ub. Dephosphorylated by PPP4C. Hyperphosphorylation during mitosis correlates with its exclusion from chromatin and DNA lesions. Hyperphosphorylated in an ATR-dependent manner in response to DNA damage induced by UV irradiation. Dephosphorylated by PPP5C. Phosphorylation at Ser-368 and Thr-662 promotes interaction with TOPBP1. Phosphorylated by VRK1. In terms of processing, asymmetrically dimethylated on Arg residues by PRMT1. Methylation is required for DNA binding. Post-translationally, monoubiquitinated at Lys-1682 by MSL2 is reponse to DNA damage, leading to its stabilization.

The protein localises to the nucleus. Its subcellular location is the chromosome. It localises to the centromere. The protein resides in the kinetochore. Double-strand break (DSB) repair protein involved in response to DNA damage, telomere dynamics and class-switch recombination (CSR) during antibody genesis. Plays a key role in the repair of double-strand DNA breaks (DSBs) in response to DNA damage by promoting non-homologous end joining (NHEJ)-mediated repair of DSBs and specifically counteracting the function of the homologous recombination (HR) repair protein BRCA1. In response to DSBs, phosphorylation by ATM promotes interaction with RIF1 and dissociation from NUDT16L1/TIRR, leading to recruitment to DSBs sites. Recruited to DSBs sites by recognizing and binding histone H2A monoubiquitinated at 'Lys-15' (H2AK15Ub) and histone H4 dimethylated at 'Lys-20' (H4K20me2), two histone marks that are present at DSBs sites. Required for immunoglobulin class-switch recombination (CSR) during antibody genesis, a process that involves the generation of DNA DSBs. Participates in the repair and the orientation of the broken DNA ends during CSR. In contrast, it is not required for classic NHEJ and V(D)J recombination. Promotes NHEJ of dysfunctional telomeres. The protein is TP53-binding protein 1 of Mus musculus (Mouse).